We begin with the raw amino-acid sequence, 277 residues long: Coiled-coil domain-containing protein 117 (277 aa).

The tract at residues 1–69 is disordered; sequence MAALGRPFSG…GRVSIHCRKK (69 aa). Positions 26 to 37 are enriched in low complexity; it reads FAGRAFPPGAAG. Omega-N-methylarginine is present on Arg-47. Ser-52 bears the Phosphoserine mark. Over residues 58 to 69 the composition is skewed to basic residues; it reads ARGRVSIHCRKK. Residues 139 to 166 are a coiled coil; sequence QCEVARRRLQEIEDRIIDEDEEVESDRN. The disordered stretch occupies residues 212–277; that stretch reads LPELLPEKPK…ATSTEEEMEL (66 aa).

In terms of assembly, interacts with CIAO2B; the interaction is direct. Interacts with MMS19; the interaction is indirect.

It localises to the cytoplasm. The protein localises to the cytoskeleton. It is found in the spindle. Its subcellular location is the nucleus. Its function is as follows. Facilitates DNA repair, cell cycle progression, and cell proliferation through its interaction with CIAO2B. The sequence is that of Coiled-coil domain-containing protein 117 from Mus musculus (Mouse).